A 397-amino-acid polypeptide reads, in one-letter code: Acetate kinase (397 aa).

Asn8 serves as a coordination point for Mg(2+). ATP is bound at residue Lys15. Arg89 contributes to the substrate binding site. The active-site Proton donor/acceptor is Asp146. Residues 206 to 210, 283 to 285, and 331 to 335 each bind ATP; these read HVGNG, DMR, and GIGEN. Glu383 serves as a coordination point for Mg(2+).

It belongs to the acetokinase family. As to quaternary structure, homodimer. Mg(2+) is required as a cofactor. Requires Mn(2+) as cofactor.

It is found in the cytoplasm. The catalysed reaction is acetate + ATP = acetyl phosphate + ADP. The protein operates within metabolic intermediate biosynthesis; acetyl-CoA biosynthesis; acetyl-CoA from acetate: step 1/2. In terms of biological role, catalyzes the formation of acetyl phosphate from acetate and ATP. Can also catalyze the reverse reaction. In Streptococcus thermophilus (strain ATCC BAA-491 / LMD-9), this protein is Acetate kinase.